Consider the following 68-residue polypeptide: uncharacterized protein (68 aa).

The region spanning 2 to 67 (KTITLNIKGI…VIEDAGFDAT (66 aa)) is the HMA domain. Residues Cys-13 and Cys-16 each contribute to the a metal cation site.

This is an uncharacterized protein from Haemophilus influenzae (strain ATCC 51907 / DSM 11121 / KW20 / Rd).